We begin with the raw amino-acid sequence, 187 residues long: DNA-directed RNA polymerase subunit Rpo7 (187 aa).

An S1 motif domain is found at 82–166 (YELIEGEVVD…RGSKIALTMR (85 aa)).

The protein belongs to the eukaryotic RPB7/RPC8 RNA polymerase subunit family. In terms of assembly, part of the RNA polymerase complex. Forms a stalk with Rpo4 that extends from the main structure.

It is found in the cytoplasm. It catalyses the reaction RNA(n) + a ribonucleoside 5'-triphosphate = RNA(n+1) + diphosphate. In terms of biological role, DNA-dependent RNA polymerase (RNAP) catalyzes the transcription of DNA into RNA using the four ribonucleoside triphosphates as substrates. This Methanocaldococcus jannaschii (strain ATCC 43067 / DSM 2661 / JAL-1 / JCM 10045 / NBRC 100440) (Methanococcus jannaschii) protein is DNA-directed RNA polymerase subunit Rpo7.